Here is a 599-residue protein sequence, read N- to C-terminus: Sulfite reductase [NADPH] flavoprotein alpha-component (599 aa).

Positions 64-202 constitute a Flavodoxin-like domain; sequence ITIISASQTG…AASEWRARVV (139 aa). Residues 70–75, 117–120, and 153–162 contribute to the FMN site; these read SQTGNA, STQG, and LGDSSYEFFC. Residues 234 to 448 enclose the FAD-binding FR-type domain; the sequence is DAPLVASLSV…IEHNDNFRLP (215 aa). Residues Thr322, Ala356, 386-389, 404-406, Tyr410, and 419-422 each bind FAD; these read RLYS, TVG, and GGAS. NADP(+) is bound by residues 519–520, 525–529, and Asp561; these read SR and KVYVQ. Residue Tyr599 participates in FAD binding.

The protein belongs to the NADPH-dependent sulphite reductase flavoprotein subunit CysJ family. In the N-terminal section; belongs to the flavodoxin family. This sequence in the C-terminal section; belongs to the flavoprotein pyridine nucleotide cytochrome reductase family. In terms of assembly, alpha(8)-beta(8). The alpha component is a flavoprotein, the beta component is a hemoprotein. FAD serves as cofactor. It depends on FMN as a cofactor.

The enzyme catalyses hydrogen sulfide + 3 NADP(+) + 3 H2O = sulfite + 3 NADPH + 4 H(+). Its pathway is sulfur metabolism; hydrogen sulfide biosynthesis; hydrogen sulfide from sulfite (NADPH route): step 1/1. Component of the sulfite reductase complex that catalyzes the 6-electron reduction of sulfite to sulfide. This is one of several activities required for the biosynthesis of L-cysteine from sulfate. The flavoprotein component catalyzes the electron flow from NADPH -&gt; FAD -&gt; FMN to the hemoprotein component. The protein is Sulfite reductase [NADPH] flavoprotein alpha-component of Escherichia coli (strain K12).